A 629-amino-acid polypeptide reads, in one-letter code: Chaperone protein HtpG (629 aa).

The a; substrate-binding stretch occupies residues 1-335 (MSEVETSVEK…TADLPLNVSR (335 aa)). The tract at residues 336–551 (EMIQESPLLA…EQGPDRQLQK (216 aa)) is b. Residues 552–629 (MLQDAGRIEG…SRVFGRALKE (78 aa)) form a c region.

Belongs to the heat shock protein 90 family. As to quaternary structure, homodimer.

It is found in the cytoplasm. Its function is as follows. Molecular chaperone. Has ATPase activity. In Rhizobium meliloti (strain 1021) (Ensifer meliloti), this protein is Chaperone protein HtpG.